Here is a 340-residue protein sequence, read N- to C-terminus: Phosphate acyltransferase (340 aa).

It belongs to the PlsX family. Homodimer. Probably interacts with PlsY.

It is found in the cytoplasm. It carries out the reaction a fatty acyl-[ACP] + phosphate = an acyl phosphate + holo-[ACP]. The protein operates within lipid metabolism; phospholipid metabolism. Functionally, catalyzes the reversible formation of acyl-phosphate (acyl-PO(4)) from acyl-[acyl-carrier-protein] (acyl-ACP). This enzyme utilizes acyl-ACP as fatty acyl donor, but not acyl-CoA. This chain is Phosphate acyltransferase, found in Nitrosococcus oceani (strain ATCC 19707 / BCRC 17464 / JCM 30415 / NCIMB 11848 / C-107).